The primary structure comprises 620 residues: DNA primase (620 aa).

The segment at cysteine 38 to cysteine 62 adopts a CHC2-type zinc-finger fold. Residues leucine 266–alanine 350 enclose the Toprim domain. Mg(2+) is bound by residues glutamate 272, aspartate 319, and aspartate 321.

Belongs to the DnaG primase family. Monomer. Interacts with DnaB. Zn(2+) serves as cofactor. It depends on Mg(2+) as a cofactor.

The enzyme catalyses ssDNA + n NTP = ssDNA/pppN(pN)n-1 hybrid + (n-1) diphosphate.. In terms of biological role, RNA polymerase that catalyzes the synthesis of short RNA molecules used as primers for DNA polymerase during DNA replication. In Mycoplasma pneumoniae (strain ATCC 29342 / M129 / Subtype 1) (Mycoplasmoides pneumoniae), this protein is DNA primase.